We begin with the raw amino-acid sequence, 362 residues long: Probable dual-specificity RNA methyltransferase RlmN (362 aa).

Glu99 acts as the Proton acceptor in catalysis. The 237-residue stretch at 105 to 341 folds into the Radical SAM core domain; it reads SPDRHTVCVS…VTVRKSQGAS (237 aa). Cysteines 112 and 346 form a disulfide. 3 residues coordinate [4Fe-4S] cluster: Cys119, Cys123, and Cys126. Residues 171-172, Ser204, 227-229, and Asn303 contribute to the S-adenosyl-L-methionine site; these read GE and SLH. The active-site S-methylcysteine intermediate is Cys346.

Belongs to the radical SAM superfamily. RlmN family. Requires [4Fe-4S] cluster as cofactor.

The protein resides in the cytoplasm. The enzyme catalyses adenosine(2503) in 23S rRNA + 2 reduced [2Fe-2S]-[ferredoxin] + 2 S-adenosyl-L-methionine = 2-methyladenosine(2503) in 23S rRNA + 5'-deoxyadenosine + L-methionine + 2 oxidized [2Fe-2S]-[ferredoxin] + S-adenosyl-L-homocysteine. It catalyses the reaction adenosine(37) in tRNA + 2 reduced [2Fe-2S]-[ferredoxin] + 2 S-adenosyl-L-methionine = 2-methyladenosine(37) in tRNA + 5'-deoxyadenosine + L-methionine + 2 oxidized [2Fe-2S]-[ferredoxin] + S-adenosyl-L-homocysteine. Functionally, specifically methylates position 2 of adenine 2503 in 23S rRNA and position 2 of adenine 37 in tRNAs. This Chlorobium phaeobacteroides (strain BS1) protein is Probable dual-specificity RNA methyltransferase RlmN.